A 93-amino-acid polypeptide reads, in one-letter code: Small ribosomal subunit protein uS15 (93 aa).

It belongs to the universal ribosomal protein uS15 family. In terms of assembly, part of the 30S ribosomal subunit. Forms a bridge to the 50S subunit in the 70S ribosome, contacting the 23S rRNA.

Its function is as follows. One of the primary rRNA binding proteins, it binds directly to 16S rRNA where it helps nucleate assembly of the platform of the 30S subunit by binding and bridging several RNA helices of the 16S rRNA. Functionally, forms an intersubunit bridge (bridge B4) with the 23S rRNA of the 50S subunit in the ribosome. The polypeptide is Small ribosomal subunit protein uS15 (Ehrlichia ruminantium (strain Gardel)).